A 281-amino-acid polypeptide reads, in one-letter code: Pantothenate synthetase (281 aa).

An ATP-binding site is contributed by 26–33; the sequence is MGYLHQGH. Residue histidine 33 is the Proton donor of the active site. A (R)-pantoate-binding site is contributed by glutamine 57. Residue glutamine 57 coordinates beta-alanine. 143–146 lines the ATP pocket; the sequence is GQKD. A (R)-pantoate-binding site is contributed by glutamine 149. ATP-binding positions include valine 172 and 180-183; that span reads LSSR.

The protein belongs to the pantothenate synthetase family. Homodimer.

The protein resides in the cytoplasm. It catalyses the reaction (R)-pantoate + beta-alanine + ATP = (R)-pantothenate + AMP + diphosphate + H(+). Its pathway is cofactor biosynthesis; (R)-pantothenate biosynthesis; (R)-pantothenate from (R)-pantoate and beta-alanine: step 1/1. Functionally, catalyzes the condensation of pantoate with beta-alanine in an ATP-dependent reaction via a pantoyl-adenylate intermediate. This is Pantothenate synthetase from Chloroflexus aurantiacus (strain ATCC 29366 / DSM 635 / J-10-fl).